The following is a 172-amino-acid chain: Translation initiation factor IF-3 (172 aa).

Belongs to the IF-3 family. As to quaternary structure, monomer.

The protein localises to the cytoplasm. In terms of biological role, IF-3 binds to the 30S ribosomal subunit and shifts the equilibrium between 70S ribosomes and their 50S and 30S subunits in favor of the free subunits, thus enhancing the availability of 30S subunits on which protein synthesis initiation begins. This chain is Translation initiation factor IF-3, found in Campylobacter curvus (strain 525.92).